Consider the following 193-residue polypeptide: uncharacterized protein (193 aa).

The chain crosses the membrane as a helical span at residues 119 to 143 (LAGSLLAATGMTLGIFGMGITGTCW).

Its subcellular location is the mitochondrion membrane. This is an uncharacterized protein from Saccharomyces cerevisiae (strain ATCC 204508 / S288c) (Baker's yeast).